Consider the following 916-residue polypeptide: Translation initiation factor IF-2 (916 aa).

Positions 1–325 (MTDSNDDKTL…QEKFRRSQVQ (325 aa)) are disordered. The span at 60–91 (ITPATPAAPVRAAEPAPAPAQARPQQSTPAPR) shows a compositional bias: low complexity. Over residues 97–108 (GQANQRPQQSYQ) the composition is skewed to polar residues. Basic and acidic residues predominate over residues 125-182 (SPEEMDARRRALAESQARDAQDAIRRAEEEKRRAAEEAVRKAAEAEEAARRAVEEAAR). 2 stretches are compositionally biased toward low complexity: residues 183–209 (QAEAAAAAAAEPAVTAPAPAPVTAEAR) and 229–243 (DGAAARPAPGAPAAV). Positions 414–581 (SRPPVVTIMG…AVLLQAEILD (168 aa)) constitute a tr-type G domain. The segment at 423–430 (GHVDHGKT) is G1. 423 to 430 (GHVDHGKT) contacts GTP. The tract at residues 448–452 (GITQH) is G2. The G3 stretch occupies residues 469–472 (DTPG). GTP is bound by residues 469–473 (DTPGH) and 523–526 (NKID). Positions 523–526 (NKID) are G4. The tract at residues 559-561 (SAK) is G5.

This sequence belongs to the TRAFAC class translation factor GTPase superfamily. Classic translation factor GTPase family. IF-2 subfamily.

Its subcellular location is the cytoplasm. Functionally, one of the essential components for the initiation of protein synthesis. Protects formylmethionyl-tRNA from spontaneous hydrolysis and promotes its binding to the 30S ribosomal subunits. Also involved in the hydrolysis of GTP during the formation of the 70S ribosomal complex. The chain is Translation initiation factor IF-2 from Rhizobium etli (strain ATCC 51251 / DSM 11541 / JCM 21823 / NBRC 15573 / CFN 42).